We begin with the raw amino-acid sequence, 337 residues long: Transaldolase (337 aa).

Residues 1-10 carry the Nuclear localization signal motif; it reads MSGSPVKRQR. Lys142 serves as the catalytic Schiff-base intermediate with substrate. Lys219 bears the N6-acetyllysine mark. Phosphoserine is present on residues Ser237 and Ser256. 3 positions are modified to N6-acetyllysine: Lys269, Lys286, and Lys321.

It belongs to the transaldolase family. Type 1 subfamily. As to quaternary structure, homodimer. Interacts with KPNA1 and KPNA4.

The protein localises to the nucleus. The protein resides in the cytoplasm. It catalyses the reaction D-sedoheptulose 7-phosphate + D-glyceraldehyde 3-phosphate = D-erythrose 4-phosphate + beta-D-fructose 6-phosphate. Its pathway is carbohydrate degradation; pentose phosphate pathway; D-glyceraldehyde 3-phosphate and beta-D-fructose 6-phosphate from D-ribose 5-phosphate and D-xylulose 5-phosphate (non-oxidative stage): step 2/3. Its function is as follows. Catalyzes the rate-limiting step of the non-oxidative phase in the pentose phosphate pathway. Catalyzes the reversible conversion of sedheptulose-7-phosphate and D-glyceraldehyde 3-phosphate into erythrose-4-phosphate and beta-D-fructose 6-phosphate. In Sus scrofa (Pig), this protein is Transaldolase (TALDO1).